The chain runs to 204 residues: Large ribosomal subunit protein uL4 (204 aa).

The tract at residues 53–77 (ISDVSGTTAKPYSQKRTGRARQGSL) is disordered. Polar residues predominate over residues 56–67 (VSGTTAKPYSQK).

Belongs to the universal ribosomal protein uL4 family. Part of the 50S ribosomal subunit.

Its function is as follows. One of the primary rRNA binding proteins, this protein initially binds near the 5'-end of the 23S rRNA. It is important during the early stages of 50S assembly. It makes multiple contacts with different domains of the 23S rRNA in the assembled 50S subunit and ribosome. In terms of biological role, forms part of the polypeptide exit tunnel. This Wolbachia sp. subsp. Brugia malayi (strain TRS) protein is Large ribosomal subunit protein uL4.